Here is a 108-residue protein sequence, read N- to C-terminus: Pumilarin (108 aa).

A propeptide spanning residues 1–38 is cleaved from the precursor; the sequence is MTETKNEIKLHVLFGALAVGFLMLALFSFSLQMLPVAD. The cyclopeptide (Leu-Trp) cross-link spans 39–108; that stretch reads LAKEFGIPGS…KKGRKAVIAW (70 aa).

The cross-link permits a high resistance to proteolysis. Is more resistant to specific proteases than to unspecific proteases.

The protein localises to the secreted. In terms of biological role, cyclopeptide antibiotic that inhibits both Gram-positive and Gram-negative bacteria. Shows potent to weak activities against M.flavus (MIC=3 ug/ml), B.cereus (MIC=12 ug/ml), B.pumilus (MIC=12 ug/ml), E.coli (MIC=12 ug/ml), and S.pneumoniae (MIC=47 ug/ml). May act by forming pores. The polypeptide is Pumilarin (Bacillus safensis).